Consider the following 335-residue polypeptide: Ornithine carbamoyltransferase, catabolic (335 aa).

Carbamoyl phosphate contacts are provided by residues 59–62 (STRT), Gln86, Arg110, and 137–140 (HPTQ). Residues Asn169, Asp233, and 237–238 (SM) each bind L-ornithine. Residues 274 to 275 (CL) and Arg319 each bind carbamoyl phosphate.

This sequence belongs to the aspartate/ornithine carbamoyltransferase superfamily. OTCase family.

It is found in the cytoplasm. The enzyme catalyses carbamoyl phosphate + L-ornithine = L-citrulline + phosphate + H(+). The protein operates within amino-acid degradation; L-arginine degradation via ADI pathway; carbamoyl phosphate from L-arginine: step 2/2. Reversibly catalyzes the transfer of the carbamoyl group from carbamoyl phosphate (CP) to the N(epsilon) atom of ornithine (ORN) to produce L-citrulline. The chain is Ornithine carbamoyltransferase, catabolic (arcB) from Bacillus licheniformis (strain ATCC 14580 / DSM 13 / JCM 2505 / CCUG 7422 / NBRC 12200 / NCIMB 9375 / NCTC 10341 / NRRL NRS-1264 / Gibson 46).